A 578-amino-acid polypeptide reads, in one-letter code: SWR1 complex bromodomain subunit bdf1 (578 aa).

Residues 1 to 18 show a composition bias toward basic and acidic residues; the sequence is MSSESRENEVKAETKDEI. Disordered stretches follow at residues 1–89, 192–254, and 504–578; these read MSSE…PPPQ, DAEQ…RKNN, and ADSS…SESA. Positions 22-36 are enriched in polar residues; it reads GSPQLNGDNNIQSSD. Basic and acidic residues-rich tracts occupy residues 37–52 and 60–77; these read GHNDENEESLSRKRDS and LKQEEKESMPKKEPEPTV. Residues 84-190 enclose the Bromo 1 domain; sequence GMPPPQQKYC…EVFERQLKQL (107 aa). The segment covering 219-242 has biased composition (low complexity); it reads NSSVSSTSASVAASTAPKAASPAV. Phosphoserine occurs at positions 221, 223, and 224. Phosphothreonine is present on threonine 225. Phosphoserine occurs at positions 226 and 239. The 110-residue stretch at 251 to 360 folds into the Bromo 2 domain; that stretch reads RKNNSQMRFC…NVFKEKWEAR (110 aa). The NET domain maps to 430–510; sequence RRDLTKEYGP…KPDADSSEPA (81 aa). Serine 511 bears the Phosphoserine mark. Residues 526-537 are compositionally biased toward basic and acidic residues; sequence VLSETEQAEKIR. Positions 550–563 are enriched in polar residues; that stretch reads TSPTSPESNNAANV. Positions 566–578 are enriched in acidic residues; sequence SESDNESESSESA.

Belongs to the BET family. In terms of assembly, component of the SWR1 chromatin-remodeling complex.

It is found in the nucleus. Component of the SWR1 complex which mediates the ATP-dependent exchange of histone H2A for the H2A variant HZT1 leading to transcriptional regulation of selected genes by chromatin remodeling. The sequence is that of SWR1 complex bromodomain subunit bdf1 (bdf1) from Schizosaccharomyces pombe (strain 972 / ATCC 24843) (Fission yeast).